Consider the following 396-residue polypeptide: Activity-regulated cytoskeleton-associated protein (396 aa).

Residues 54–78 are a coiled coil; the sequence is SKQVERELKGLHRSVGKLENNLDGY. The interaction with SH3GL1 or SH3GL3 stretch occupies residues 89-100; it reads KSIKACLCRCQE. Positions 177-207 are disordered; sequence PPAAGELPEQESVEAQQYQSWGPGEDGQPSP. Residues 195–214 are interaction with DNM2; that stretch reads QSWGPGEDGQPSPGVDTQIF. Phosphoserine; by CaMK2 is present on serine 260. Residues lysine 268 and lysine 269 each participate in a glycyl lysine isopeptide (Lys-Gly) (interchain with G-Cter in ubiquitin) cross-link. Threonine 278 is subject to Phosphothreonine. Positions 356 to 396 are disordered; the sequence is QDGLEQAAEPSGTPLPTEDETEALTPALTSESVASDRTQPE. A compositionally biased stretch (polar residues) spans 382–396; that stretch reads ALTSESVASDRTQPE.

Belongs to the ARC/ARG3.1 family. Homooligomer; homooligomerizes into virion-like capsids. Interacts with SH3GL1/endophilin-2, SH3GL3/endophilin-3 and DNM2/DYN2. Interacts with CAMK2B (in the kinase inactive state); leading to target ARC to inactive synapses. Interacts with PSEN1. Interacts with GRIN2A and GRIN2B; inhibiting homooligomerization. In terms of processing, ubiquitinated by UBE3A, leading to its degradation by the proteasome, thereby promoting AMPA receptors (AMPARs) expression at synapses. Ubiquitinated by RNF216 at Lys-268 and Lys-269 limiting ARC protein levels induced by synaptic activity and thus regulating ARC-dependent forms of synaptic plasticity. Post-translationally, palmitoylation anchors the protein into the membrane by allowing direct insertion into the hydrophobic core of the lipid bilayer. Phosphorylation at Ser-260 by CaMK2 prevents homooligomerization into virion-like capsids by disrupting an interaction surface essential for high-order oligomerization. Phosphorylation by CaMK2 inhibits synaptic activity. As to expression, expressed in brain and testis. In primary visual cortex, detected in all cortical layers with the exception of layer 5: present at highest level in layers 2/3 and 4, the predominant sites of ocular dominance plasticity (at protein level). Also expressed in skin-migratory dendritic cells.

The protein localises to the extracellular vesicle membrane. Its subcellular location is the postsynaptic cell membrane. It localises to the synapse. It is found in the postsynaptic density. The protein resides in the early endosome membrane. The protein localises to the cell projection. Its subcellular location is the dendrite. It localises to the cytoplasm. It is found in the cytoskeleton. The protein resides in the cell cortex. The protein localises to the dendritic spine. Its subcellular location is the cytoplasmic vesicle. It localises to the secretory vesicle. It is found in the acrosome. The protein resides in the clathrin-coated vesicle membrane. Functionally, master regulator of synaptic plasticity that self-assembles into virion-like capsids that encapsulate RNAs and mediate intercellular RNA transfer in the nervous system. ARC protein is released from neurons in extracellular vesicles that mediate the transfer of ARC mRNA into new target cells, where ARC mRNA can undergo activity-dependent translation. ARC capsids are endocytosed and are able to transfer ARC mRNA into the cytoplasm of neurons. Acts as a key regulator of synaptic plasticity: required for protein synthesis-dependent forms of long-term potentiation (LTP) and depression (LTD) and for the formation of long-term memory. Regulates synaptic plasticity by promoting endocytosis of AMPA receptors (AMPARs) in response to synaptic activity: this endocytic pathway maintains levels of surface AMPARs in response to chronic changes in neuronal activity through synaptic scaling, thereby contributing to neuronal homeostasis. Acts as a postsynaptic mediator of activity-dependent synapse elimination in the developing cerebellum by mediating elimination of surplus climbing fiber synapses. Accumulates at weaker synapses, probably to prevent their undesired enhancement. This suggests that ARC-containing virion-like capsids may be required to eliminate synaptic material. Required to transduce experience into long-lasting changes in visual cortex plasticity and for long-term memory. Involved in postsynaptic trafficking and processing of amyloid-beta A4 (APP) via interaction with PSEN1. In addition to its role in synapses, also involved in the regulation of the immune system: specifically expressed in skin-migratory dendritic cells and regulates fast dendritic cell migration, thereby regulating T-cell activation. In Mus musculus (Mouse), this protein is Activity-regulated cytoskeleton-associated protein.